A 156-amino-acid polypeptide reads, in one-letter code: Protein-export protein SecB (156 aa).

The protein belongs to the SecB family. As to quaternary structure, homotetramer, a dimer of dimers. One homotetramer interacts with 1 SecA dimer.

It is found in the cytoplasm. Its function is as follows. One of the proteins required for the normal export of preproteins out of the cell cytoplasm. It is a molecular chaperone that binds to a subset of precursor proteins, maintaining them in a translocation-competent state. It also specifically binds to its receptor SecA. The polypeptide is Protein-export protein SecB (Paraburkholderia xenovorans (strain LB400)).